Reading from the N-terminus, the 339-residue chain is NmrA-like family domain-containing oxidoreductase notA (339 aa).

NADP(+) contacts are provided by residues 13 to 18 (GATGAQ), 39 to 43 (RKPDS), 60 to 61 (DG), 81 to 83 (TNS), lysine 140, and 164 to 167 (YMGI).

This sequence belongs to the NmrA-type oxidoreductase family.

NmrA-like family domain-containing oxidoreductase; part of the gene cluster that mediates the biosynthesis of notoamide, a fungal indole alkaloid that belongs to a family of natural products containing a characteristic bicyclo[2.2.2]diazaoctane core. The first step of notoamide biosynthesis involves coupling of L-proline and L-tryptophan by the bimodular NRPS notE, to produce cyclo-L-tryptophan-L-proline called brevianamide F. The reverse prenyltransferase notF then acts as a deoxybrevianamide E synthase and converts brevianamide F to deoxybrevianamide E via reverse prenylation at C-2 of the indole ring leading to the bicyclo[2.2.2]diazaoctane core. Deoxybrevianamide E is further hydroxylated at C-6 of the indole ring, likely catalyzed by the cytochrome P450 monooxygenase notG, to yield 6-hydroxy-deoxybrevianamide E. 6-hydroxy-deoxybrevianamide E is a specific substrate of the prenyltransferase notC for normal prenylation at C-7 to produce 6-hydroxy-7-prenyl-deoxybrevianamide, also called notoamide S. As the proposed pivotal branching point in notoamide biosynthesis, notoamide S can be diverted to notoamide E through an oxidative pyran ring closure putatively catalyzed by either notH cytochrome P450 monooxygenase or the notD FAD-linked oxidoreductase. This step would be followed by an indole 2,3-epoxidation-initiated pinacol-like rearrangement catalyzed by the notB FAD-dependent monooxygenase leading to the formation of notoamide C and notoamide D. On the other hand notoamide S is converted to notoamide T by notH (or notD), a bifunctional oxidase that also functions as the intramolecular Diels-Alderase responsible for generation of (+)-notoamide T. To generate antipodal (-)-notoaminide T, notH' (or notD') in Aspergillus versicolor is expected to catalyze a Diels-Alder reaction leading to the opposite stereochemistry. The remaining oxidoreductase notD (or notH) likely catalyzes the oxidative pyran ring formation to yield (+)-stephacidin A. The FAD-dependent monooxygenase notI is highly similar to notB and is predicted to catalyze a similar conversion from (+)-stephacidin A to (-)-notoamide B via the 2,3-epoxidation of (+)-stephacidin A followed by a pinacol-type rearrangement. Finally, it remains unclear which enzyme could be responsible for the final hydroxylation steps leading to notoamide A and sclerotiamide. The protein is NmrA-like family domain-containing oxidoreductase notA of Aspergillus sp. (strain MF297-2).